The chain runs to 345 residues: Serpentine receptor class beta-5 (345 aa).

Topologically, residues 1-22 (MAEINQTKCDLAFQISYHPIYR) are extracellular. N-linked (GlcNAc...) asparagine glycosylation occurs at Asn-5. Residues 23-43 (LAQFWTLSVSLLAVPSLLYFL) traverse the membrane as a helical segment. Over 44 to 57 (LKRVLLLPFHGNLK) the chain is Cytoplasmic. The chain crosses the membrane as a helical span at residues 58–78 (CLLITYFSSIFLYALVLCFDF). Over 79–103 (SYQCLIPFIVTTKCSLIIDQTLYKC) the chain is Extracellular. The helical transmembrane segment at 104–124 (GHMTSLFFLTTPMLLPFGFSI) threads the bilayer. The Cytoplasmic portion of the chain corresponds to 125–142 (ERFVAVGMAYKYEKMRTL). A helical transmembrane segment spans residues 143–163 (LGPILCFILVAPNFVVFYFLF). The Extracellular portion of the chain corresponds to 164 to 189 (RDEQFTDSFISFLVLPNTPAVQFNNY). A helical membrane pass occupies residues 190–210 (LWFLLYAKIGNFCCNCVLLIF). At 211–241 (HKRFKNTYLKKKTSLSVRYALEEISNSSKFT) the chain is on the cytoplasmic side. Residues 242–262 (LILTFTHLVFFGAYTIGSILV) form a helical membrane-spanning segment. Over 263–280 (RTLGESFFGNFLNFYVAR) the chain is Extracellular. The chain crosses the membrane as a helical span at residues 281-301 (GVNCAVPTYNLLIAFVGLISL). The Cytoplasmic portion of the chain corresponds to 302 to 345 (RQLNSRRHAKILTKVLIRVTGQEGARNYDDIIMQQWNTVSNRTR).

This sequence belongs to the nematode receptor-like protein srb family. As to expression, expressed throughout the head.

It localises to the cell membrane. The protein resides in the perikaryon. The protein localises to the cell projection. Its subcellular location is the dendrite. G-protein coupled receptor. Plays a role in the navigational capacity of sperm and promotes the targeting of sperm derived from males to the fertilization site in the uterus of hermaphrodites. The protein is Serpentine receptor class beta-5 of Caenorhabditis elegans.